The following is a 263-amino-acid chain: tRNA (guanine-N(7)-)-methyltransferase (263 aa).

The tract at residues Met-1 to Arg-33 is disordered. S-adenosyl-L-methionine contacts are provided by Glu-89, Glu-114, Asp-146, and Asp-169. Asp-169 is an active-site residue. Substrate contacts are provided by residues Lys-173, Asp-205, and Thr-242–Glu-245.

Belongs to the class I-like SAM-binding methyltransferase superfamily. TrmB family.

The catalysed reaction is guanosine(46) in tRNA + S-adenosyl-L-methionine = N(7)-methylguanosine(46) in tRNA + S-adenosyl-L-homocysteine. Its pathway is tRNA modification; N(7)-methylguanine-tRNA biosynthesis. Its function is as follows. Catalyzes the formation of N(7)-methylguanine at position 46 (m7G46) in tRNA. This chain is tRNA (guanine-N(7)-)-methyltransferase, found in Mycolicibacterium gilvum (strain PYR-GCK) (Mycobacterium gilvum (strain PYR-GCK)).